A 237-amino-acid chain; its full sequence is Ribonuclease PH (237 aa).

Phosphate is bound by residues arginine 86 and 124-126 (GTR).

Belongs to the RNase PH family. In terms of assembly, homohexameric ring arranged as a trimer of dimers.

It catalyses the reaction tRNA(n+1) + phosphate = tRNA(n) + a ribonucleoside 5'-diphosphate. Phosphorolytic 3'-5' exoribonuclease that plays an important role in tRNA 3'-end maturation. Removes nucleotide residues following the 3'-CCA terminus of tRNAs; can also add nucleotides to the ends of RNA molecules by using nucleoside diphosphates as substrates, but this may not be physiologically important. Probably plays a role in initiation of 16S rRNA degradation (leading to ribosome degradation) during starvation. The chain is Ribonuclease PH from Shewanella loihica (strain ATCC BAA-1088 / PV-4).